Consider the following 598-residue polypeptide: Pantothenate kinase 1 (598 aa).

The segment at 32 to 161 (ARPGDQGKAG…SPGAPVGTSA (130 aa)) is disordered. The span at 38–49 (GKAGGGSPGWGC) shows a compositional bias: gly residues. Position 215 is a phosphoserine (S215). Residues 218–235 (KKCRLRRRMDSGRKNRPP) carry the Nucleolar localization signal motif. The Proton acceptor role is filled by E363. Residues S417, S420, and R432 each coordinate acetyl-CoA.

It belongs to the type II pantothenate kinase family. In terms of assembly, homodimer. Expressed at high levels in brain, heart, kidney, liver, skeletal muscle and testis. In terms of tissue distribution, detected at much lower levels in kidney, liver, brain and testis and not detected in heart or skeletal muscle.

The protein resides in the cytoplasm. It localises to the nucleus. The protein localises to the nucleolus. It is found in the cytosol. Its subcellular location is the cytoplasmic vesicle. The protein resides in the clathrin-coated vesicle. It localises to the recycling endosome. It catalyses the reaction (R)-pantothenate + ATP = (R)-4'-phosphopantothenate + ADP + H(+). It participates in cofactor biosynthesis; coenzyme A biosynthesis; CoA from (R)-pantothenate: step 1/5. Its activity is regulated as follows. Regulated by feedback inhibition by CoA and its thioesters. In terms of biological role, catalyzes the phosphorylation of pantothenate to generate 4'-phosphopantothenate in the first and rate-determining step of coenzyme A (CoA) synthesis. This is Pantothenate kinase 1 (PANK1) from Homo sapiens (Human).